The following is a 142-amino-acid chain: Hemoglobin subunit alpha-A (142 aa).

Positions 2-142 (VLTAGDKANV…VATALTSKYR (141 aa)) constitute a Globin domain. H59 and H88 together coordinate heme b.

It belongs to the globin family. As to quaternary structure, heterotetramer of two alpha-A chains and two beta chains. Red blood cells.

Its function is as follows. Involved in oxygen transport from the lung to the various peripheral tissues. In Chelonoidis niger (Galapagos giant tortoise), this protein is Hemoglobin subunit alpha-A.